Consider the following 151-residue polypeptide: Small ribosomal subunit protein uS11 (151 aa).

This sequence belongs to the universal ribosomal protein uS11 family.

This chain is Small ribosomal subunit protein uS11 (RPS14), found in Podocoryna carnea (Hydrozoan).